Reading from the N-terminus, the 941-residue chain is Cilia- and flagella-associated protein 69 (941 aa).

Low complexity predominate over residues 1–10 (MWTEEAAATA). The disordered stretch occupies residues 1-23 (MWTEEAAATAEARESGIRNKSSS).

The protein localises to the cell projection. Its subcellular location is the cilium. It localises to the flagellum. In terms of biological role, cilium- and flagellum-associated protein. In the olfactory epithelium, regulates the speed of activation and termination of the odor response and thus contributes to the robustness of olfactory transduction pathways. Required for sperm flagellum assembly and stability. The sequence is that of Cilia- and flagella-associated protein 69 from Papio anubis (Olive baboon).